The sequence spans 818 residues: Nibrin (818 aa).

The FHA domain maps to 22 to 70 (YVVGRKNCEILLTNDQSISRVHAVLTVTEQAVTLKDSSKYGTFVNGEKL). BRCT domains follow at residues 91–168 (SKFS…SALS) and 211–301 (GKTF…LAAI). 3 disordered regions span residues 372–716 (AVGE…DLPR), 729–757 (NNSSRSRPGPLQTHNPNDKNVKRFRKKNV), and 793–818 (EEKLNEREETLGDDLFRYNPRPAKKR). Over residues 379–405 (KTNPTQKASTTNKPLSLGQEPSSTRIV) the composition is skewed to polar residues. Residues 409–419 (VMSSESFSVVE) show a composition bias toward low complexity. Residues 444–469 (APSSGNTTLKHSPQKQTALTSFFQPS) are compositionally biased toward polar residues. Positions 470–475 (SKKRPR) match the Nuclear localization signal motif. A compositionally biased stretch (polar residues) spans 515–530 (EETSLGQACGTGQNSS). The span at 549-571 (TAADDLEMSLEELEFLMSDEMDE) shows a compositional bias: acidic residues. A compositionally biased stretch (polar residues) spans 586 to 602 (GLTSKINSEQLSNQQEV). The span at 603 to 612 (TESKGRKGEK) shows a compositional bias: basic and acidic residues. Low complexity predominate over residues 613 to 625 (NQQSSSSNIQSMQ). Polar residues-rich tracts occupy residues 633–644 (VTNQDTQTQSKR) and 653–662 (SSANKGPSKN). The segment covering 663 to 675 (KTPELEEVKKEEV) has biased composition (basic and acidic residues). Polar residues-rich tracts occupy residues 678–692 (VVNSRPQNGISQTSE) and 699–708 (MQASTSNSGP). Basic and acidic residues predominate over residues 793-808 (EEKLNEREETLGDDLF). Positions 804–813 (GDDLFRYNPR) match the FxF/Y motif motif.

It belongs to the Nibrin family. As to quaternary structure, component of the MRN complex composed of two heterodimers rad50 and mre11 associated with a single nbn.

Its subcellular location is the nucleus. It is found in the chromosome. The protein localises to the PML body. The protein resides in the telomere. Functionally, component of the MRN complex, which plays a central role in double-strand break (DSB) repair, DNA recombination, maintenance of telomere integrity and meiosis. The MRN complex is involved in the repair of DNA double-strand breaks (DSBs) via homologous recombination (HR), an error-free mechanism which primarily occurs during S and G2 phases. The complex (1) mediates the end resection of damaged DNA, which generates proper single-stranded DNA, a key initial steps in HR, and is (2) required for the recruitment of other repair factors and efficient activation of ATM and ATR upon DNA damage. The MRN complex possesses single-strand endonuclease activity and double-strand-specific 3'-5' exonuclease activity, which are provided by MRE11, to initiate end resection, which is required for single-strand invasion and recombination. Within the MRN complex, nbn acts as a protein-protein adapter, which specifically recognizes and binds phosphorylated proteins, promoting their recruitment to DNA damage sites. Recruits mre11 and rad50 components of the MRN complex to DSBs in response to DNA damage. Promotes the recruitment of PI3/PI4-kinase family members atm, atr, and probably DNA-PKcs to the DNA damage sites, activating their functions. Mediates the recruitment of phosphorylated rbbp8/CtIP to DSBs, leading to cooperation between the MRN complex and rbbp8/CtIP to initiate end resection. The MRN complex and rbbp8/CtIP are also required for chromosome alignment during metaphase. This chain is Nibrin (nbn), found in Danio rerio (Zebrafish).